Here is a 427-residue protein sequence, read N- to C-terminus: WD repeat and SOCS box-containing protein 1 (427 aa).

WD repeat units lie at residues 129 to 170 (SRSI…LLLN), 173 to 213 (DHTD…NMVK), 217 to 256 (GHPNRVYSSAFSPDSSVLCSVGASKAVLLWNMDKYTLIRK), 259 to 298 (GHHNDVVSCEFSPDGALLATASYDTRVIVWDHQRGSILLE), and 314 to 353 (ANDRWVRSVSFCADGRHIASVSDDRLVRFWSIEERAPQAV). Residues 379–427 (SVHFWECPRSIASLQHLCRMALRRVKTTQQVEALPVPMPLRDFLTYRVV) form the SOCS box domain.

Component of a probable ECS E3 ubiquitin-protein ligase complex that contains the Elongin BC complex.

It participates in protein modification; protein ubiquitination. Its function is as follows. Probable substrate-recognition component of a SCF-like ECS (Elongin-Cullin-SOCS-box protein) E3 ubiquitin-protein ligase complex which mediates the ubiquitination and subsequent proteasomal degradation of target proteins. The protein is WD repeat and SOCS box-containing protein 1 (wsb1) of Takifugu rubripes (Japanese pufferfish).